A 229-amino-acid chain; its full sequence is Ribonuclease HII (229 aa).

Residues 34–223 (WPVAGADEAG…LRKSEDGPEM (190 aa)) enclose the RNase H type-2 domain. Positions 40, 41, and 131 each coordinate a divalent metal cation. The tract at residues 209 to 229 (MSFRPLRKSEDGPEMDELIPE) is disordered. The segment covering 220–229 (GPEMDELIPE) has biased composition (acidic residues).

The protein belongs to the RNase HII family. It depends on Mn(2+) as a cofactor. Requires Mg(2+) as cofactor.

The protein resides in the cytoplasm. It catalyses the reaction Endonucleolytic cleavage to 5'-phosphomonoester.. In terms of biological role, endonuclease that specifically degrades the RNA of RNA-DNA hybrids. The chain is Ribonuclease HII from Rhizobium etli (strain CIAT 652).